The primary structure comprises 396 residues: Multidrug resistance protein MdtL (396 aa).

Over 1-4 the chain is Cytoplasmic; the sequence is MFRY. Residues 5–25 form a helical membrane-spanning segment; the sequence is LLCCFGLVLMYPTGIDMYLVG. At 26-41 the chain is on the periplasmic side; that stretch reads LPQIANQLGATEAQLH. A helical membrane pass occupies residues 42-62; that stretch reads IAFSVYLAGMATTMLFAGSLA. The Cytoplasmic portion of the chain corresponds to 63–64; the sequence is DR. The chain crosses the membrane as a helical span at residues 65 to 85; the sequence is IGRKPITLFSALLFALASYFA. Residues 86–92 are Periplasmic-facing; the sequence is ARSQSSD. A helical transmembrane segment spans residues 93–113; it reads LFLVARFVQGVGAGCCYVVAF. The Cytoplasmic segment spans residues 114–131; that stretch reads AILRDALDDKRRAKVLSM. A helical transmembrane segment spans residues 132–152; that stretch reads VNGVTCIIPVIAPVIGHLIML. The Periplasmic portion of the chain corresponds to 153–157; that stretch reads RFPWP. The helical transmembrane segment at 158–178 threads the bilayer; it reads SLFYTMAVMGLLVFGLCLFVL. Residues 179–209 lie on the Cytoplasmic side of the membrane; sequence RETYSKASFHSQTLPRVQTESFKQGFFISRV. Residues 210–230 form a helical membrane-spanning segment; sequence VITTLGVTTILSYVNVSPMLI. At 231-242 the chain is on the periplasmic side; it reads MGQMGFDRGQYS. Residues 243–263 traverse the membrane as a helical segment; that stretch reads NTMAMTALVSMLASFSTPFLL. Residues 264–277 lie on the Cytoplasmic side of the membrane; that stretch reads NQFKEKSLILFSQT. 2 consecutive transmembrane segments (helical) span residues 278-298 and 299-319; these read LFAA…GQLF and NLLG…VTMS. Residues 320-333 are Cytoplasmic-facing; that stretch reads QALSPFVARAGVAS. The chain crosses the membrane as a helical span at residues 334–354; the sequence is SLLGIAQVCTSALYIWVMGLL. At 355–360 the chain is on the periplasmic side; it reads EVSAIN. Residues 361–381 traverse the membrane as a helical segment; the sequence is ILLAILAVGALISITLMLAVP. The Cytoplasmic portion of the chain corresponds to 382-396; sequence KLSEMVANEQIPESA.

The protein belongs to the major facilitator superfamily. DHA1 family. MdtL (TC 2.A.1.2.22) subfamily.

It localises to the cell inner membrane. The sequence is that of Multidrug resistance protein MdtL from Shewanella sp. (strain ANA-3).